We begin with the raw amino-acid sequence, 218 residues long: MRRLNGVFICLILFITKISYAKDKGANGDMVNIVAFGEGRCSDTSYWMKWHWLPMWRMLGSTGRINFDYHPYGIKTTCVDSESADDVVCDCHHGNRECLLNQLQACVIEALPNFEDYMEVVTCIQGKQNISMAAEVCFEGPTKLDRTKMMECAESRHGRKLFSDQENIVAQMAPEMDWAPWILINGTRYKEAEEDLWQFLCDRFIDPRPIHCPKKIVY.

A signal peptide spans 1 to 21 (MRRLNGVFICLILFITKISYA). Asn129 and Asn185 each carry an N-linked (GlcNAc...) asparagine glycan.

It belongs to the GILT family.

Its subcellular location is the secreted. In Caenorhabditis elegans, this protein is GILT-like protein ZK669.3.